Reading from the N-terminus, the 530-residue chain is AarF domain-containing protein kinase 1 (530 aa).

Residues 155–467 (SFDDTPLGTA…ASSFLNMSRC (313 aa)) form the Protein kinase domain. Residues 161–169 (LGTASLAQV) and Lys-183 each bind ATP. The active-site Proton acceptor is the Asp-315.

This sequence belongs to the protein kinase superfamily. ADCK protein kinase family.

It is found in the mitochondrion. Its function is as follows. Appears to be essential for maintaining mitochondrial cristae formation and mitochondrial function by acting via YME1L1 in a kinase-independent manner to regulate essential mitochondrial structural proteins OPA1 and IMMT. The action of this enzyme is not yet clear. It is not known if it has protein kinase activity and what type of substrate it would phosphorylate (Ser, Thr or Tyr). The chain is AarF domain-containing protein kinase 1 from Homo sapiens (Human).